We begin with the raw amino-acid sequence, 172 residues long: Large ribosomal subunit protein uL10 (172 aa).

Belongs to the universal ribosomal protein uL10 family. In terms of assembly, part of the ribosomal stalk of the 50S ribosomal subunit. The N-terminus interacts with L11 and the large rRNA to form the base of the stalk. The C-terminus forms an elongated spine to which L12 dimers bind in a sequential fashion forming a multimeric L10(L12)X complex.

Functionally, forms part of the ribosomal stalk, playing a central role in the interaction of the ribosome with GTP-bound translation factors. This is Large ribosomal subunit protein uL10 from Methylobacterium radiotolerans (strain ATCC 27329 / DSM 1819 / JCM 2831 / NBRC 15690 / NCIMB 10815 / 0-1).